The sequence spans 358 residues: Nicotinate-nucleotide--dimethylbenzimidazole phosphoribosyltransferase (358 aa).

Residue Glu-314 is the Proton acceptor of the active site.

This sequence belongs to the CobT family.

It carries out the reaction 5,6-dimethylbenzimidazole + nicotinate beta-D-ribonucleotide = alpha-ribazole 5'-phosphate + nicotinate + H(+). The protein operates within nucleoside biosynthesis; alpha-ribazole biosynthesis; alpha-ribazole from 5,6-dimethylbenzimidazole: step 1/2. In terms of biological role, catalyzes the synthesis of alpha-ribazole-5'-phosphate from nicotinate mononucleotide (NAMN) and 5,6-dimethylbenzimidazole (DMB). The sequence is that of Nicotinate-nucleotide--dimethylbenzimidazole phosphoribosyltransferase from Mycobacterium marinum (strain ATCC BAA-535 / M).